The sequence spans 432 residues: Ribosomal protein uS12 methylthiotransferase RimO (432 aa).

The region spanning 1–112 (MKIGVVSLGC…ILNYLGLKEK (112 aa)) is the MTTase N-terminal domain. Cysteine 10, cysteine 46, cysteine 75, cysteine 134, cysteine 138, and cysteine 141 together coordinate [4Fe-4S] cluster. A Radical SAM core domain is found at 120–350 (STPRSYAYLK…MAIQRGITRK (231 aa)). The 70-residue stretch at 353-422 (EEFLGKEIEV…DYDLAGRDTE (70 aa)) folds into the TRAM domain.

It belongs to the methylthiotransferase family. RimO subfamily. It depends on [4Fe-4S] cluster as a cofactor.

The protein localises to the cytoplasm. It catalyses the reaction L-aspartate(89)-[ribosomal protein uS12]-hydrogen + (sulfur carrier)-SH + AH2 + 2 S-adenosyl-L-methionine = 3-methylsulfanyl-L-aspartate(89)-[ribosomal protein uS12]-hydrogen + (sulfur carrier)-H + 5'-deoxyadenosine + L-methionine + A + S-adenosyl-L-homocysteine + 2 H(+). In terms of biological role, catalyzes the methylthiolation of an aspartic acid residue of ribosomal protein uS12. The protein is Ribosomal protein uS12 methylthiotransferase RimO of Aquifex aeolicus (strain VF5).